Reading from the N-terminus, the 122-residue chain is MIQMQTNLDVADNSGARRVMCIKVLGGSKRKYASIGDIIVVSIKEAIPRGRVKKGDVMKAVVVRTAKDIRRPDGSVIRFDTNAAVLIDNKKEPIGTRIFGPVPRELRAKNHMKIISLAPEVL.

The protein belongs to the universal ribosomal protein uL14 family. Part of the 50S ribosomal subunit. Forms a cluster with proteins L3 and L19. In the 70S ribosome, L14 and L19 interact and together make contacts with the 16S rRNA in bridges B5 and B8.

Its function is as follows. Binds to 23S rRNA. Forms part of two intersubunit bridges in the 70S ribosome. This Sinorhizobium fredii (strain NBRC 101917 / NGR234) protein is Large ribosomal subunit protein uL14.